Here is a 427-residue protein sequence, read N- to C-terminus: Methylenetetrahydrofolate--tRNA-(uracil-5-)-methyltransferase TrmFO (427 aa).

An FAD-binding site is contributed by 8-13 (GAGISG).

This sequence belongs to the MnmG family. TrmFO subfamily. Requires FAD as cofactor.

Its subcellular location is the cytoplasm. The catalysed reaction is uridine(54) in tRNA + (6R)-5,10-methylene-5,6,7,8-tetrahydrofolate + NADH + H(+) = 5-methyluridine(54) in tRNA + (6S)-5,6,7,8-tetrahydrofolate + NAD(+). The enzyme catalyses uridine(54) in tRNA + (6R)-5,10-methylene-5,6,7,8-tetrahydrofolate + NADPH + H(+) = 5-methyluridine(54) in tRNA + (6S)-5,6,7,8-tetrahydrofolate + NADP(+). Catalyzes the folate-dependent formation of 5-methyl-uridine at position 54 (M-5-U54) in all tRNAs. In Mycoplasmopsis agalactiae (strain NCTC 10123 / CIP 59.7 / PG2) (Mycoplasma agalactiae), this protein is Methylenetetrahydrofolate--tRNA-(uracil-5-)-methyltransferase TrmFO.